Reading from the N-terminus, the 445-residue chain is Probable multidrug resistance protein YpnP (445 aa).

Helical transmembrane passes span 15 to 35, 49 to 69, 95 to 115, 136 to 156, 168 to 188, 194 to 214, 240 to 260, 277 to 297, 314 to 334, 355 to 375, 384 to 404, and 411 to 431; these read LVLFSMPIMLGNALQVSFQFI, LGAAAVSSTIVLTVLSFILGL, AFVVLLTGLSIGFGAAGFFLS, LQIQFIGILFLFGYNFISTVL, FIAFAVVLNTVLAPLFISVFR, AAYSTILSQGIAFLYGLFYVI, IPAGLQMMVITGGMMAIMSVV, LDSIITLPAMAAGTAVNSMAG, LGVIAVISCMLVIAVMIWVFG, LKWIAFFYPFIGVNFVLNGIV, VLVLNLISFWVLRYPFTALFS, and GIGLGIGMSFLFSSCAAFLYY.

It belongs to the multi antimicrobial extrusion (MATE) (TC 2.A.66.1) family.

It is found in the cell membrane. The chain is Probable multidrug resistance protein YpnP (ypnP) from Bacillus subtilis (strain 168).